The chain runs to 209 residues: Potassium-transporting ATPase KdpC subunit (209 aa).

Residues 18-38 (MLAVFTLFGLGLAYSLVATGI) traverse the membrane as a helical segment.

The protein belongs to the KdpC family. The system is composed of three essential subunits: KdpA, KdpB and KdpC.

It is found in the cell inner membrane. Functionally, part of the high-affinity ATP-driven potassium transport (or Kdp) system, which catalyzes the hydrolysis of ATP coupled with the electrogenic transport of potassium into the cytoplasm. This subunit acts as a catalytic chaperone that increases the ATP-binding affinity of the ATP-hydrolyzing subunit KdpB by the formation of a transient KdpB/KdpC/ATP ternary complex. The protein is Potassium-transporting ATPase KdpC subunit of Xanthomonas oryzae pv. oryzae (strain MAFF 311018).